Consider the following 967-residue polypeptide: Leucine--tRNA ligase (967 aa).

The 'HIGH' region motif lies at 43–53 (PYLSGHLHVGH). A 'KMSKS' region motif is present at residues 650–654 (KMSKS). Lys653 provides a ligand contact to ATP.

The protein belongs to the class-I aminoacyl-tRNA synthetase family.

The protein localises to the cytoplasm. The catalysed reaction is tRNA(Leu) + L-leucine + ATP = L-leucyl-tRNA(Leu) + AMP + diphosphate. In Pyrococcus abyssi (strain GE5 / Orsay), this protein is Leucine--tRNA ligase.